A 134-amino-acid chain; its full sequence is ATP synthase epsilon chain (134 aa).

Belongs to the ATPase epsilon chain family. In terms of assembly, F-type ATPases have 2 components, CF(1) - the catalytic core - and CF(0) - the membrane proton channel. CF(1) has five subunits: alpha(3), beta(3), gamma(1), delta(1), epsilon(1). CF(0) has three main subunits: a, b and c.

The protein localises to the cell inner membrane. Its function is as follows. Produces ATP from ADP in the presence of a proton gradient across the membrane. The polypeptide is ATP synthase epsilon chain (Syntrophobacter fumaroxidans (strain DSM 10017 / MPOB)).